An 87-amino-acid chain; its full sequence is Small ribosomal subunit protein bS20 (87 aa).

It belongs to the bacterial ribosomal protein bS20 family.

Binds directly to 16S ribosomal RNA. The sequence is that of Small ribosomal subunit protein bS20 from Finegoldia magna (strain ATCC 29328 / DSM 20472 / WAL 2508) (Peptostreptococcus magnus).